The sequence spans 279 residues: Undecaprenyl-diphosphatase (279 aa).

A run of 8 helical transmembrane segments spans residues 2 to 22 (LIIELLKAIFFGIIEGITEWL), 44 to 64 (AFIEMFNIVIQLGAIIAVMLI), 85 to 105 (WQLWLKVVIACIPSILIAVPL), 113 to 133 (FYFMVPIAIALIVYGIAFIWI), 163 to 183 (VLSIVPGTSRSGATILGAIIL), 188 to 208 (TVAADFTFFLAIPTMFGYSGL), 223 to 243 (AQVLILLVASLTAFVVSLLAI), and 255 to 275 (FTIFGKYRIVLGSLLLIYSFF).

The protein belongs to the UppP family.

It localises to the cell membrane. It catalyses the reaction di-trans,octa-cis-undecaprenyl diphosphate + H2O = di-trans,octa-cis-undecaprenyl phosphate + phosphate + H(+). Its function is as follows. Catalyzes the dephosphorylation of undecaprenyl diphosphate (UPP). Confers resistance to bacitracin. The sequence is that of Undecaprenyl-diphosphatase from Streptococcus pyogenes serotype M12 (strain MGAS2096).